The primary structure comprises 421 residues: ATP-dependent RNA helicase RhlB (421 aa).

The Q motif signature appears at 9–37 (QKFSDFALHPAVIEALEKKGFHNCTPIQA). The Helicase ATP-binding domain maps to 40 to 219 (LPLTLEGRDV…FEQMNNAEYV (180 aa)). 53–60 (AQTGTGKT) serves as a coordination point for ATP. A DEAD box motif is present at residues 165 to 168 (DEAD). The 146-residue stretch at 245 to 390 (RLLQTLLEEE…VSKYNPDALM (146 aa)) folds into the Helicase C-terminal domain. A disordered region spans residues 396–421 (PLRLTRARPGNGPRRNGPPRNRRRSG). A compositionally biased stretch (low complexity) spans 403-414 (RPGNGPRRNGPP).

This sequence belongs to the DEAD box helicase family. RhlB subfamily. As to quaternary structure, component of the RNA degradosome, which is a multiprotein complex involved in RNA processing and mRNA degradation.

It localises to the cytoplasm. It carries out the reaction ATP + H2O = ADP + phosphate + H(+). DEAD-box RNA helicase involved in RNA degradation. Has RNA-dependent ATPase activity and unwinds double-stranded RNA. This is ATP-dependent RNA helicase RhlB from Klebsiella pneumoniae (strain 342).